A 215-amino-acid polypeptide reads, in one-letter code: Octanoyltransferase (215 aa).

In terms of domain architecture, BPL/LPL catalytic spans Pro31–Glu206. Substrate contacts are provided by residues Arg70–His77, Ser137–Gly139, and Gly150–Ala152. Cys168 serves as the catalytic Acyl-thioester intermediate.

This sequence belongs to the LipB family.

Its subcellular location is the cytoplasm. The catalysed reaction is octanoyl-[ACP] + L-lysyl-[protein] = N(6)-octanoyl-L-lysyl-[protein] + holo-[ACP] + H(+). It participates in protein modification; protein lipoylation via endogenous pathway; protein N(6)-(lipoyl)lysine from octanoyl-[acyl-carrier-protein]: step 1/2. Its function is as follows. Catalyzes the transfer of endogenously produced octanoic acid from octanoyl-acyl-carrier-protein onto the lipoyl domains of lipoate-dependent enzymes. Lipoyl-ACP can also act as a substrate although octanoyl-ACP is likely to be the physiological substrate. In Pseudomonas putida (strain GB-1), this protein is Octanoyltransferase.